The primary structure comprises 232 residues: Ornithine carbamoyltransferase (232 aa).

Carbamoyl phosphate is bound by residues Gln-15, Arg-39, and 66 to 69 (HPTQ). Residues Asn-99, Asp-163, and 167 to 168 (SM) each bind L-ornithine. Carbamoyl phosphate is bound by residues 204-207 (HCLP) and Thr-232.

The protein belongs to the aspartate/ornithine carbamoyltransferase superfamily. OTCase family.

Its subcellular location is the cytoplasm. It catalyses the reaction carbamoyl phosphate + L-ornithine = L-citrulline + phosphate + H(+). It participates in amino-acid biosynthesis; L-arginine biosynthesis; L-arginine from L-ornithine and carbamoyl phosphate: step 1/3. Its function is as follows. Reversibly catalyzes the transfer of the carbamoyl group from carbamoyl phosphate (CP) to the N(epsilon) atom of ornithine (ORN) to produce L-citrulline. The sequence is that of Ornithine carbamoyltransferase (argF) from Neisseria sicca.